A 228-amino-acid polypeptide reads, in one-letter code: DNA-binding response regulator MtrA (228 aa).

The Response regulatory domain maps to Arg-7–Leu-120. Asp-56 carries the 4-aspartylphosphate modification. Residues Ala-128 to Pro-227 constitute a DNA-binding region (ompR/PhoB-type).

Post-translationally, phosphorylated by MtrB.

In terms of biological role, member of the two-component regulatory system MtrA/MtrB. In Mycobacterium bovis (strain ATCC BAA-935 / AF2122/97), this protein is DNA-binding response regulator MtrA (mtrA).